The chain runs to 108 residues: DNA-directed RNA polymerase III subunit RPC10 (108 aa).

The Zn(2+) site is built by Cys-5, Cys-8, Cys-25, Cys-28, Cys-69, and Cys-72. The segment at 5–28 (CPGCGNGLIVEEGQRCHRFACNTC) adopts a C4-type zinc-finger fold. The TFIIS-type zinc-finger motif lies at 65-107 (TAEPCPKCEHPRAYFMQLQTRSADEPMTTFYKCCNAQCGHRWR). Residues 88–89 (DE) carry the Hairpin motif. Cys-98 and Cys-102 together coordinate Zn(2+).

The protein belongs to the archaeal RpoM/eukaryotic RPA12/RPB9/RPC11 RNA polymerase family. Component of the RNA polymerase III complex consisting of 17 subunits: a ten-subunit horseshoe-shaped catalytic core composed of POLR3A/RPC1, POLR3B/RPC2, POLR1C/RPAC1, POLR1D/RPAC2, POLR3K/RPC10, POLR2E/RPABC1, POLR2F/RPABC2, POLR2H/RPABC3, POLR2K/RPABC4 and POLR2L/RPABC5; a mobile stalk composed of two subunits POLR3H/RPC8 and CRCP/RPC9, protruding from the core and functioning primarily in transcription initiation; and additional subunits homologous to general transcription factors of the RNA polymerase II machinery, POLR3C/RPC3-POLR3F/RPC6-POLR3G/RPC7 heterotrimer required for transcription initiation and POLR3D/RPC4-POLR3E/RPC5 heterodimer involved in both transcription initiation and termination.

The protein localises to the nucleus. Its function is as follows. Core component of RNA polymerase III (Pol III) which synthesizes small non-coding RNAs using the four ribonucleoside triphosphates as substrates. Can mediate Pol I proofreading of the nascent RNA transcript. Anchors into the Pol III active site to constantly monitor transcription fidelity, cleaves mis-incorporated 5'-ribonucleotides and restarts the transcription process. Once Pol III reaches the poly(dT) termination signal, can induce Pol III clamp opening and transcription termination. Pol III plays an important role in sensing and limiting infection by intracellular bacteria and DNA viruses. Acts as a nuclear and cytosolic DNA sensor involved in innate immune response. Can sense non-self dsDNA that serves as template for transcription into dsRNA. The non-self RNA polymerase III transcripts, such as Epstein-Barr virus-encoded RNAs (EBERs) induce type I interferon and NF-kappa-B through the RIG-I pathway. The polypeptide is DNA-directed RNA polymerase III subunit RPC10 (Mus musculus (Mouse)).